The sequence spans 215 residues: Small ribosomal subunit protein uS7 (215 aa).

It belongs to the universal ribosomal protein uS7 family. Part of the 30S ribosomal subunit.

In terms of biological role, one of the primary rRNA binding proteins, it binds directly to 16S rRNA where it nucleates assembly of the head domain of the 30S subunit. Is located at the subunit interface close to the decoding center. This chain is Small ribosomal subunit protein uS7, found in Thermococcus celer.